Here is a 57-residue protein sequence, read N- to C-terminus: uncharacterized protein (57 aa).

The interval 1 to 57 (MANHRGGSGNFAEDRERASEAGKKGGQHSGGNFKNDPQRASEAGKKGGKSSHGKSDN) is disordered. Basic and acidic residues-rich tracts occupy residues 12 to 23 (AEDRERASEAGK) and 36 to 45 (DPQRASEAGK). The span at 46 to 57 (KGGKSSHGKSDN) shows a compositional bias: basic residues.

This sequence belongs to the con-10 family.

This is an uncharacterized protein from Escherichia coli (strain K12).